Here is a 127-residue protein sequence, read N- to C-terminus: Large ribosomal subunit protein eL8 (127 aa).

Belongs to the eukaryotic ribosomal protein eL8 family. As to quaternary structure, part of the 50S ribosomal subunit. Probably part of the RNase P complex.

It localises to the cytoplasm. Its function is as follows. Multifunctional RNA-binding protein that recognizes the K-turn motif in ribosomal RNA, the RNA component of RNase P, box H/ACA, box C/D and box C'/D' sRNAs. This is Large ribosomal subunit protein eL8 from Aeropyrum pernix (strain ATCC 700893 / DSM 11879 / JCM 9820 / NBRC 100138 / K1).